Consider the following 315-residue polypeptide: NAD(P)H-dependent anabolic L-arginine dehydrogenase DauB (315 aa).

It belongs to the ornithine cyclodeaminase/mu-crystallin family.

It catalyses the reaction L-arginine + NAD(+) + H2O = 5-guanidino-2-oxopentanoate + NH4(+) + NADH + H(+). The enzyme catalyses L-arginine + NADP(+) + H2O = 5-guanidino-2-oxopentanoate + NH4(+) + NADPH + H(+). Involved in the anabolism of D-lysine and D-arginine. Under aerobic conditions, the arginine succinyltransferase (AST) and arginine transaminase (ATA) pathways are 2 major routes for L-arginine utilization as the sole source of carbon and nitrogen. The D-to-L racemization of arginine by DauA and DauB is necessary, before to be channeled into the AST and/or ATA pathways. DauB catalyzes the synthesis of L-arginine from 2-ketoarginine (2-KA) and ammonium. The polypeptide is NAD(P)H-dependent anabolic L-arginine dehydrogenase DauB (Pseudomonas aeruginosa (strain ATCC 15692 / DSM 22644 / CIP 104116 / JCM 14847 / LMG 12228 / 1C / PRS 101 / PAO1)).